The sequence spans 609 residues: UvrABC system protein C (609 aa).

A GIY-YIG domain is found at 16–94; it reads HLPGVYRHLD…IKSLRPRYNI (79 aa). The UVR domain maps to 203–238; it reads REVMDEIEARMLQASTELRFEEAAVLRDQMGSLSKV.

It belongs to the UvrC family. In terms of assembly, interacts with UvrB in an incision complex.

It is found in the cytoplasm. Its function is as follows. The UvrABC repair system catalyzes the recognition and processing of DNA lesions. UvrC both incises the 5' and 3' sides of the lesion. The N-terminal half is responsible for the 3' incision and the C-terminal half is responsible for the 5' incision. The polypeptide is UvrABC system protein C (Bordetella bronchiseptica (strain ATCC BAA-588 / NCTC 13252 / RB50) (Alcaligenes bronchisepticus)).